The chain runs to 187 residues: UPF0398 protein SAB1311c (187 aa).

It belongs to the UPF0398 family.

The polypeptide is UPF0398 protein SAB1311c (Staphylococcus aureus (strain bovine RF122 / ET3-1)).